The chain runs to 422 residues: NADH-quinone oxidoreductase subunit D 1 (422 aa).

Belongs to the complex I 49 kDa subunit family. As to quaternary structure, NDH-1 is composed of 14 different subunits. Subunits NuoB, C, D, E, F, and G constitute the peripheral sector of the complex.

Its subcellular location is the cell membrane. The enzyme catalyses a quinone + NADH + 5 H(+)(in) = a quinol + NAD(+) + 4 H(+)(out). NDH-1 shuttles electrons from NADH, via FMN and iron-sulfur (Fe-S) centers, to quinones in the respiratory chain. The immediate electron acceptor for the enzyme in this species is believed to be ubiquinone. Couples the redox reaction to proton translocation (for every two electrons transferred, four hydrogen ions are translocated across the cytoplasmic membrane), and thus conserves the redox energy in a proton gradient. This Herpetosiphon aurantiacus (strain ATCC 23779 / DSM 785 / 114-95) protein is NADH-quinone oxidoreductase subunit D 1.